The sequence spans 129 residues: Small ribosomal subunit protein uS11 (129 aa).

It belongs to the universal ribosomal protein uS11 family. As to quaternary structure, part of the 30S ribosomal subunit. Interacts with proteins S7 and S18. Binds to IF-3.

Located on the platform of the 30S subunit, it bridges several disparate RNA helices of the 16S rRNA. Forms part of the Shine-Dalgarno cleft in the 70S ribosome. The chain is Small ribosomal subunit protein uS11 from Enterobacter sp. (strain 638).